The chain runs to 249 residues: Probable transcriptional regulatory protein OTBS_0251 (249 aa).

The protein belongs to the TACO1 family.

The protein resides in the cytoplasm. This Orientia tsutsugamushi (strain Boryong) (Rickettsia tsutsugamushi) protein is Probable transcriptional regulatory protein OTBS_0251.